The following is a 67-amino-acid chain: Small ribosomal subunit protein eS17 (67 aa).

Belongs to the eukaryotic ribosomal protein eS17 family.

This chain is Small ribosomal subunit protein eS17, found in Pyrococcus abyssi (strain GE5 / Orsay).